Here is a 159-residue protein sequence, read N- to C-terminus: Large ribosomal subunit protein uL15 (159 aa).

Residues 1–13 (MRIHEVTPKEGST) are compositionally biased toward basic and acidic residues. The disordered stretch occupies residues 1 to 51 (MRIHEVTPKEGSTKRRRRVGRGISAGQGASCGFGMRGQKSRSGTGTKAGFE). Residues 23–35 (ISAGQGASCGFGM) are compositionally biased toward gly residues.

The protein belongs to the universal ribosomal protein uL15 family. Part of the 50S ribosomal subunit.

Binds to the 23S rRNA. The protein is Large ribosomal subunit protein uL15 of Rippkaea orientalis (strain PCC 8801 / RF-1) (Cyanothece sp. (strain PCC 8801)).